Consider the following 468-residue polypeptide: UDP-N-acetylmuramate--L-alanine ligase (468 aa).

121–127 (GSHGKTT) serves as a coordination point for ATP.

The protein belongs to the MurCDEF family.

Its subcellular location is the cytoplasm. The catalysed reaction is UDP-N-acetyl-alpha-D-muramate + L-alanine + ATP = UDP-N-acetyl-alpha-D-muramoyl-L-alanine + ADP + phosphate + H(+). Its pathway is cell wall biogenesis; peptidoglycan biosynthesis. Its function is as follows. Cell wall formation. This chain is UDP-N-acetylmuramate--L-alanine ligase, found in Borreliella afzelii (strain PKo) (Borrelia afzelii).